Reading from the N-terminus, the 247-residue chain is MQTQVLFEHPLNEKMRTWLRIEFLIQQLTVNLPIVDHAGALHFFRNVSELLDVFERGEVRTELLKELDRQQRKLQTWIGVPGVDQSRIEALIQQLKAAGSVLISAPRIGQFLREDRLIALVRQRLSIPGGCCSFDLPTLHIWLHLPQAQRDCQVETWIASLNPLTQALTMVLDLIRQSAPFRKQTSLNGFYQDNGGDADLLRLNLSLDSQLYPQISGHKSRFAIRFMPLDTENGQVPERLDFELACC.

It belongs to the ZapD family. Interacts with FtsZ.

Its subcellular location is the cytoplasm. In terms of biological role, cell division factor that enhances FtsZ-ring assembly. Directly interacts with FtsZ and promotes bundling of FtsZ protofilaments, with a reduction in FtsZ GTPase activity. The protein is Cell division protein ZapD of Escherichia coli O157:H7.